A 221-amino-acid polypeptide reads, in one-letter code: Cytidylate kinase (221 aa).

11-19 (GPSGVGKST) lines the ATP pocket.

This sequence belongs to the cytidylate kinase family. Type 1 subfamily.

Its subcellular location is the cytoplasm. It carries out the reaction CMP + ATP = CDP + ADP. It catalyses the reaction dCMP + ATP = dCDP + ADP. In Mycoplasmopsis pulmonis (strain UAB CTIP) (Mycoplasma pulmonis), this protein is Cytidylate kinase.